Here is a 154-residue protein sequence, read N- to C-terminus: Protein X (154 aa).

Residues 68–117 (PCALRFTSARRMETTVNAHRNLPKVLHKRTLGLSVMSTTDLEAYFKDCVF) form a mitochondrial targeting sequence region.

Belongs to the orthohepadnavirus protein X family. In terms of assembly, may form homodimer. May interact with host CEBPA, CFLAR, CREB1, DDB1, E4F1, HBXIP, HSPD1/HSP60, NFKBIA, POLR2E and SMAD4. Interacts with host SMC5-SMC6 complex and induces its degradation. Interacts with host TRPC4AP; leading to prevent ubiquitination of TRPC4AP. Interacts with host PLSCR1; this interaction promotes ubiquitination and degradation of HBx and impairs HBx-mediated cell proliferation. A fraction may be phosphorylated in insect cells and HepG2 cells, a human hepatoblastoma cell line. Phosphorylated in vitro by host protein kinase C or mitogen-activated protein kinase. N-acetylated in insect cells.

Its subcellular location is the host cytoplasm. It is found in the host nucleus. The protein localises to the host mitochondrion. Multifunctional protein that plays a role in silencing host antiviral defenses and promoting viral transcription. Does not seem to be essential for HBV infection. May be directly involved in development of cirrhosis and liver cancer (hepatocellular carcinoma). Most of cytosolic activities involve modulation of cytosolic calcium. The effect on apoptosis is controversial depending on the cell types in which the studies have been conducted. May induce apoptosis by localizing in mitochondria and causing loss of mitochondrial membrane potential. May also modulate apoptosis by binding host CFLAR, a key regulator of the death-inducing signaling complex (DISC). Promotes viral transcription by using the host E3 ubiquitin ligase DDB1 to target the SMC5-SMC6 complex to proteasomal degradation. This host complex would otherwise bind to viral episomal DNA, and prevents its transcription. Moderately stimulates transcription of many different viral and cellular transcription elements. Promoters and enhancers stimulated by HBx contain DNA binding sites for NF-kappa-B, AP-1, AP-2, c-EBP, ATF/CREB, or the calcium-activated factor NF-AT. This chain is Protein X, found in Hepatitis B virus genotype B1 (isolate Japan/Yamagata-2/1998) (HBV-B).